The sequence spans 365 residues: Class I histocompatibility antigen, B alpha chain (365 aa).

Positions 1–24 (MTVMAPRTLLLLLSGALVLTETWA) are cleaved as a signal peptide. The segment at 25–114 (GSHSMRYFST…ALGYYNQSEA (90 aa)) is alpha-1. Topologically, residues 25–308 (GSHSMRYFST…EPPSQPTIPI (284 aa)) are extracellular. A glycan (N-linked (GlcNAc...) asparagine) is linked at N110. Positions 115 to 206 (GSHTIQMMSG…ENGKETLQRA (92 aa)) are alpha-2. 2 disulfides stabilise this stretch: C125–C188 and C227–C283. The alpha-3 stretch occupies residues 207-298 (EPPKTHVTHH…GLPEPLTLRW (92 aa)). The Ig-like C1-type domain maps to 209 to 297 (PKTHVTHHPV…EGLPEPLTLR (89 aa)). Residues 299-308 (EPPSQPTIPI) are connecting peptide. The chain crosses the membrane as a helical span at residues 309–332 (MGIVAILAILGAVVTGAVVTAVMW). Residues 333 to 365 (RKKSSDKKGGSYSQAARSDSAQGSDVSLTACKV) lie on the Cytoplasmic side of the membrane. The segment at 337 to 361 (SDKKGGSYSQAARSDSAQGSDVSLT) is disordered. Residues 346–359 (QAARSDSAQGSDVS) are compositionally biased toward polar residues. Residues S356 and S359 each carry the phosphoserine modification.

This sequence belongs to the MHC class I family. As to quaternary structure, heterodimer of an alpha chain and a beta chain (beta-2-microglobulin).

Its subcellular location is the membrane. Involved in the presentation of foreign antigens to the immune system. This is Class I histocompatibility antigen, B alpha chain from Saguinus oedipus (Cotton-top tamarin).